The sequence spans 315 residues: HVA22-like protein h (315 aa).

The segment at 148 to 315 (PKPKPKEKKQ…RKARSAGAPR (168 aa)) is disordered. The span at 173-190 (ATSQAASSNPQVRLQSKK) shows a compositional bias: polar residues. The span at 234–248 (PPGPPPPPPPPPPSP) shows a compositional bias: pro residues.

This sequence belongs to the DP1 family.

This is HVA22-like protein h (HVA22H) from Arabidopsis thaliana (Mouse-ear cress).